The following is a 1163-amino-acid chain: Genome polyprotein (1163 aa).

At 1–104 (MSGRKAQGKT…LSSRKRRSYE (104 aa)) the chain is on the cytoplasmic side. Residues 38–72 (PGPSRGVQGFIFFFLFNVLTGRKITAHLKKLWRML) are hydrophobic; homodimerization of capsid protein C. Positions 102–121 (SYEVLTVQFLILGMLLMTGG) are cleaved as a propeptide — ER anchor for the capsid protein C, removed in mature form by serine protease NS3. A helical membrane pass occupies residues 105-125 (VLTVQFLILGMLLMTGGVTLV). Residues 126 to 244 (RKSRWLLLNV…GERQLQKIER (119 aa)) lie on the Extracellular side of the membrane. N-linked (GlcNAc...) asparagine; by host glycosylation is found at Asn134 and Asn150. A helical membrane pass occupies residues 245-265 (WLVRNPFFAVTALAIAYLVGS). Residues 266-270 (NMTQR) are Cytoplasmic-facing. Residues 271 to 285 (VVIALLVLAVGPAYS) form a helical membrane-spanning segment. The Extracellular segment spans residues 286–730 (AHCIGITDRD…MVFGSAFQGL (445 aa)). 6 disulfides stabilise this stretch: Cys288–Cys315, Cys345–Cys406, Cys359–Cys390, Cys377–Cys401, Cys467–Cys568, and Cys585–Cys615. Residues 383 to 396 (DRGWGNGCGLFGKG) form a fusion peptide region. Residues 731–751 (FGGLSWITKVIMGAVLIWVGI) form a helical membrane-spanning segment. The Extracellular portion of the chain corresponds to 752-757 (NMRNMT). The chain crosses the membrane as a helical span at residues 758–778 (MSMSMILVGVIMMFLSLGVGA). Topologically, residues 779–1163 (DQGCAINFGK…RQGPKQILVG (385 aa)) are extracellular. 6 disulfide bridges follow: Cys782/Cys793, Cys833/Cys921, Cys957/Cys1002, Cys1058/Cys1107, Cys1069/Cys1091, and Cys1090/Cys1094. N-linked (GlcNAc...) asparagine; by host glycans are attached at residues Asn908 and Asn986.

As to quaternary structure, homodimer. Interacts (via N-terminus) with host EXOC1 (via C-terminus); this interaction results in EXOC1 degradation through the proteasome degradation pathway. Forms heterodimers with envelope protein E in the endoplasmic reticulum and Golgi. In terms of assembly, homodimer; in the endoplasmic reticulum and Golgi. As to quaternary structure, homodimer; Homohexamer when secreted. Interacts with envelope protein E. Specific enzymatic cleavages in vivo yield mature proteins. The nascent capsid protein C contains a C-terminal hydrophobic domain that act as a signal sequence for translocation of prM into the lumen of the ER. Mature capsid protein C is cleaved at a site upstream of this hydrophobic domain by NS3. prM is cleaved in post-Golgi vesicles by a host furin, releasing the mature small envelope protein M, and peptide pr. Non-structural protein 2A-alpha, a C-terminally truncated form of non-structural protein 2A, results from partial cleavage by NS3. Specific enzymatic cleavages in vivo yield mature proteins peptide 2K acts as a signal sequence and is removed from the N-terminus of NS4B by the host signal peptidase in the ER lumen. Signal cleavage at the 2K-4B site requires a prior NS3 protease-mediated cleavage at the 4A-2K site. Post-translationally, cleaved in post-Golgi vesicles by a host furin, releasing the mature small envelope protein M, and peptide pr. This cleavage is incomplete as up to 30% of viral particles still carry uncleaved prM. In terms of processing, N-glycosylated. N-glycosylated. The excreted form is glycosylated and this is required for efficient secretion of the protein from infected cells.

The protein localises to the virion. The protein resides in the host nucleus. It is found in the host cytoplasm. Its subcellular location is the host perinuclear region. It localises to the secreted. The protein localises to the virion membrane. The protein resides in the host endoplasmic reticulum membrane. In terms of biological role, plays a role in virus budding by binding to the cell membrane and gathering the viral RNA into a nucleocapsid that forms the core of a mature virus particle. During virus entry, may induce genome penetration into the host cytoplasm after hemifusion induced by the surface proteins. Can migrate to the cell nucleus where it modulates host functions. Functionally, inhibits RNA silencing by interfering with host Dicer. Its function is as follows. Prevents premature fusion activity of envelope proteins in trans-Golgi by binding to envelope protein E at pH6.0. After virion release in extracellular space, gets dissociated from E dimers. Acts as a chaperone for envelope protein E during intracellular virion assembly by masking and inactivating envelope protein E fusion peptide. prM is the only viral peptide matured by host furin in the trans-Golgi network probably to avoid catastrophic activation of the viral fusion activity in acidic Golgi compartment prior to virion release. prM-E cleavage is inefficient, and many virions are only partially matured. These uncleaved prM would play a role in immune evasion. In terms of biological role, may play a role in virus budding. Exerts cytotoxic effects by activating a mitochondrial apoptotic pathway through M ectodomain. May display a viroporin activity. Functionally, binds to host cell surface receptor and mediates fusion between viral and cellular membranes. Envelope protein is synthesized in the endoplasmic reticulum in the form of heterodimer with protein prM. They play a role in virion budding in the ER, and the newly formed immature particle is covered with 60 spikes composed of heterodimer between precursor prM and envelope protein E. The virion is transported to the Golgi apparatus where the low pH causes dissociation of PrM-E heterodimers and formation of E homodimers. prM-E cleavage is inefficient, and many virions are only partially matured. These uncleaved prM would play a role in immune evasion. Its function is as follows. Involved in immune evasion, pathogenesis and viral replication. Once cleaved off the polyprotein, is targeted to three destinations: the viral replication cycle, the plasma membrane and the extracellular compartment. Essential for viral replication. Required for formation of the replication complex and recruitment of other non-structural proteins to the ER-derived membrane structures. Excreted as a hexameric lipoparticle that plays a role against host immune response. Antagonizing the complement function. Binds to the host macrophages and dendritic cells. Inhibits signal transduction originating from Toll-like receptor 3 (TLR3). Component of the viral RNA replication complex that functions in virion assembly and antagonizes the host immune response. This Aedes aegypti (Yellowfever mosquito) protein is Genome polyprotein.